We begin with the raw amino-acid sequence, 347 residues long: Protein RecA (347 aa).

Residue 66–73 (GPESSGKT) coordinates ATP.

The protein belongs to the RecA family.

It localises to the cytoplasm. Functionally, can catalyze the hydrolysis of ATP in the presence of single-stranded DNA, the ATP-dependent uptake of single-stranded DNA by duplex DNA, and the ATP-dependent hybridization of homologous single-stranded DNAs. It interacts with LexA causing its activation and leading to its autocatalytic cleavage. This chain is Protein RecA, found in Allochromatium vinosum (Chromatium vinosum).